Reading from the N-terminus, the 749-residue chain is Transcription factor RFX3 (749 aa).

The RFX-type winged-helix DNA-binding region spans 183-258; sequence HLQWLLDNYE…YHYYGIRVKP (76 aa). The segment at 663-699 is disordered; sequence VSPGNLDKDEGSEVESEMDEELDDSSEPQAKREKTEL. Residues 674-688 are compositionally biased toward acidic residues; that stretch reads SEVESEMDEELDDSS.

This sequence belongs to the RFX family. Heterodimer; heterodimerizes with RFX1 and RFX2, and RFX6.

The protein localises to the nucleus. Functionally, transcription factor required for ciliogenesis and islet cell differentiation during endocrine pancreas development. Essential for the differentiation of nodal monocilia and left-right asymmetry specification during embryogenesis. Required for the biogenesis of motile cilia by governing growth and beating efficiency of motile cells. Also required for ciliated ependymal cell differentiation. Regulates the expression of genes involved in ciliary assembly (DYNC2LI1, FOXJ1 and BBS4) and genes involved in ciliary motility (DNAH11, DNAH9 and DNAH5). Together with RFX6, participates in the differentiation of 4 of the 5 islet cell types during endocrine pancreas development, with the exception of pancreatic PP (polypeptide-producing) cells. Regulates transcription by forming a heterodimer with another RFX protein and binding to the X-box in the promoter of target genes. Represses transcription of MAP1A in non-neuronal cells but not in neuronal cells. This chain is Transcription factor RFX3 (RFX3), found in Macaca fascicularis (Crab-eating macaque).